Reading from the N-terminus, the 432-residue chain is Adenylosuccinate synthetase (432 aa).

GTP-binding positions include 13-19 and 41-43; these read GDEGKGK and GHT. Asp14 (proton acceptor) is an active-site residue. Mg(2+) is bound by residues Asp14 and Gly41. Residues 14-17, 39-42, Thr130, Arg144, Gln225, Thr240, and Arg304 each bind IMP; these read DEGK and NAGH. Residue His42 is the Proton donor of the active site. Residue 300 to 306 coordinates substrate; it reads STTGRPR. Residues Arg306, 332-334, and 416-418 each bind GTP; these read KLD and STG.

It belongs to the adenylosuccinate synthetase family. As to quaternary structure, homodimer. Mg(2+) serves as cofactor.

It is found in the cytoplasm. It catalyses the reaction IMP + L-aspartate + GTP = N(6)-(1,2-dicarboxyethyl)-AMP + GDP + phosphate + 2 H(+). It functions in the pathway purine metabolism; AMP biosynthesis via de novo pathway; AMP from IMP: step 1/2. Functionally, plays an important role in the de novo pathway of purine nucleotide biosynthesis. Catalyzes the first committed step in the biosynthesis of AMP from IMP. This is Adenylosuccinate synthetase from Nitrosomonas europaea (strain ATCC 19718 / CIP 103999 / KCTC 2705 / NBRC 14298).